The sequence spans 200 residues: Ephrin-A2 (200 aa).

An N-terminal signal peptide occupies residues methionine 1–aspartate 22. The Ephrin RBD domain maps to serine 28–asparagine 161. A glycan (N-linked (GlcNAc...) asparagine) is linked at asparagine 36. 2 cysteine pairs are disulfide-bonded: cysteine 61-cysteine 101 and cysteine 89-cysteine 150. Residues asparagine 161 and asparagine 175 are each glycosylated (N-linked (GlcNAc...) asparagine). Residue asparagine 175 is the site of GPI-anchor amidated asparagine attachment. Positions asparagine 176 to serine 200 are cleaved as a propeptide — removed in mature form.

Belongs to the ephrin family. As to quaternary structure, binds to the receptor tyrosine kinases EPHA3, EPHA4 and EPHA5. Interacts with EPHA8; activates EPHA8. Expressed in a gradient across the tectum being more strongly expressed at the posterior pole.

Its subcellular location is the cell membrane. Its function is as follows. Cell surface GPI-bound ligand for Eph receptors, a family of receptor tyrosine kinases which are crucial for migration, repulsion and adhesion during neuronal, vascular and epithelial development. Binds promiscuously Eph receptors residing on adjacent cells, leading to contact-dependent bidirectional signaling into neighboring cells. The signaling pathway downstream of the receptor is referred to as forward signaling while the signaling pathway downstream of the ephrin ligand is referred to as reverse signaling. With the EPHA2 receptor may play a role in bone remodeling through regulation of osteoclastogenesis and osteoblastogenesis. This chain is Ephrin-A2 (EFNA2), found in Gallus gallus (Chicken).